A 225-amino-acid polypeptide reads, in one-letter code: UPF0758 protein swp_2203 (225 aa).

Positions 102–224 (ILSDPDLTRD…IVSFAERGWI (123 aa)) constitute an MPN domain. Residues histidine 173, histidine 175, and aspartate 186 each coordinate Zn(2+). Residues 173-186 (HNHPSGIAEPSTAD) carry the JAMM motif motif.

It belongs to the UPF0758 family.

This chain is UPF0758 protein swp_2203, found in Shewanella piezotolerans (strain WP3 / JCM 13877).